Consider the following 498-residue polypeptide: Cytoskeletal signaling protein slm1 (498 aa).

The segment at 1 to 23 is disordered; it reads MELSGKSEFPTRTEIPNQASNGD. 2 positions are modified to phosphoserine: Ser-175 and Ser-312. The 106-residue stretch at 300–405 folds into the PH domain; it reads VPIMAGYLIR…WWEALNTHIA (106 aa). Positions 416–475 are disordered; that stretch reads ANGPSAVSDSDDDDDDPNDFRPAVERQSSTMNTRMSQPSSAVNTNRSYGSEQIPSYADSQ. The span at 441–475 shows a compositional bias: polar residues; sequence RQSSTMNTRMSQPSSAVNTNRSYGSEQIPSYADSQ.

It localises to the cell tip. Its function is as follows. Effector of the TORC2- and calcineurin-signaling pathways. Mediates actin polarization via inhibition of calcineurin-dependent transcription. May play a role in the response to the disruption of sphingolipid synthesis, where dephosphorylation of slm1 leads to the activation and phosphorylation of ypk1 through the TORC2 and PKH1 pathways, which in turn phosphorylates orm1 and lag1 to activate sphingolipid synthesis. The polypeptide is Cytoskeletal signaling protein slm1 (slm1) (Schizosaccharomyces pombe (strain 972 / ATCC 24843) (Fission yeast)).